The chain runs to 203 residues: Dephospho-CoA kinase (203 aa).

The DPCK domain maps to 10–203; the sequence is IIGITGNIGS…LTGGAKGGRG (194 aa). 18–23 is an ATP binding site; it reads GSGKST.

This sequence belongs to the CoaE family.

It is found in the cytoplasm. The enzyme catalyses 3'-dephospho-CoA + ATP = ADP + CoA + H(+). It functions in the pathway cofactor biosynthesis; coenzyme A biosynthesis; CoA from (R)-pantothenate: step 5/5. Catalyzes the phosphorylation of the 3'-hydroxyl group of dephosphocoenzyme A to form coenzyme A. This chain is Dephospho-CoA kinase, found in Thermus thermophilus (strain ATCC BAA-163 / DSM 7039 / HB27).